The primary structure comprises 389 residues: MATLQAIKYSRGKLLVLDQLRLPHEHHYDEVSTAEQAFDCIRSMRVRGAPAIAIVAALAHAVELHNGDCTATTPEDTIAYIESRLDYLKDSRPTAVDLSNAIALLKQAARAATVEGLAHPEAKEAILNAYIAAAETILAKDLDNNTSIGTHGAAWLQQQYHATPSRPLSVLTHCNTGSLATSGHGTALGIIRSLHQQQLLKHAYCTETRPYNQGSRLTAFELVFEGIPATLVTDSMAAALFALHRERMNIGAVVVGADRVVRNGDTANKIGTYALAVLARHHGVKFVVAAPTTSIDLETESGAGIEIEERKPEELTQVTGAVVNADGSVDASRTARVAIADQRIGVWNPAFDVTPHDLIDAIVTERGAVVKGADGRFDFSQVLPERWRW.

The Proton donor role is filled by Asp-258.

Belongs to the eIF-2B alpha/beta/delta subunits family. MtnA subfamily.

It localises to the cytoplasm. The protein localises to the nucleus. It carries out the reaction 5-(methylsulfanyl)-alpha-D-ribose 1-phosphate = 5-(methylsulfanyl)-D-ribulose 1-phosphate. It functions in the pathway amino-acid biosynthesis; L-methionine biosynthesis via salvage pathway; L-methionine from S-methyl-5-thio-alpha-D-ribose 1-phosphate: step 1/6. In terms of biological role, catalyzes the interconversion of methylthioribose-1-phosphate (MTR-1-P) into methylthioribulose-1-phosphate (MTRu-1-P). In Chaetomium globosum (strain ATCC 6205 / CBS 148.51 / DSM 1962 / NBRC 6347 / NRRL 1970) (Soil fungus), this protein is Methylthioribose-1-phosphate isomerase.